The following is a 263-amino-acid chain: Ubiquitin domain-containing protein 7SL RNA2 (263 aa).

Positions 1–53 constitute a Ubiquitin-like 1 domain; it reads MNVDIDTETGSSFSITIDFGETVLQIKEKIEKSQGIPVSKQILYLDGKALEDD. A disordered region spans residues 74–93; it reads ADPNQSNEQTEQSKQIDDKK. Over residues 76–86 the composition is skewed to polar residues; that stretch reads PNQSNEQTEQS. The region spanning 184 to 263 is the Ubiquitin-like 2 domain; the sequence is FTVHVKPYQE…GDTIELIREK (80 aa).

It belongs to the ubiquitin family. In terms of tissue distribution, expressed in seedlings, roots, stems, rosettes and flowers (at protein level).

The protein resides in the nucleus. Its function is as follows. Controls phase transition from the vegetative to the reproductive state. Involved in the maintenance of the shoot apical meristem (SAM) thus preventing inflorescence meristem (IM) formation and subsequent inflorescence stem development during flowering. Regulates leaf and organ morphology. The sequence is that of Ubiquitin domain-containing protein 7SL RNA2 from Arabidopsis thaliana (Mouse-ear cress).